Reading from the N-terminus, the 344-residue chain is Methionine import ATP-binding protein MetN 1 (344 aa).

The region spanning 2–241 (IELRNLSQRF…PHHEVTRALI (240 aa)) is the ABC transporter domain. 38–45 (GRSGAGKS) is a binding site for ATP.

The protein belongs to the ABC transporter superfamily. Methionine importer (TC 3.A.1.24) family. As to quaternary structure, the complex is composed of two ATP-binding proteins (MetN), two transmembrane proteins (MetI) and a solute-binding protein (MetQ).

The protein localises to the cell inner membrane. The enzyme catalyses L-methionine(out) + ATP + H2O = L-methionine(in) + ADP + phosphate + H(+). It carries out the reaction D-methionine(out) + ATP + H2O = D-methionine(in) + ADP + phosphate + H(+). Functionally, part of the ABC transporter complex MetNIQ involved in methionine import. Responsible for energy coupling to the transport system. The polypeptide is Methionine import ATP-binding protein MetN 1 (Burkholderia lata (strain ATCC 17760 / DSM 23089 / LMG 22485 / NCIMB 9086 / R18194 / 383)).